A 373-amino-acid polypeptide reads, in one-letter code: XK-related protein 9 (373 aa).

8 helical membrane-spanning segments follow: residues 8–28, 38–58, 166–186, 206–226, 230–250, 256–276, 295–315, and 318–338; these read FMMS…DIVL, YVLG…VHCF, MVIM…QIAL, LFYK…LLFV, VALL…FINH, SVSM…FTFF, VLGT…IFNS, and FIPI…FLGV.

Belongs to the XK family. Post-translationally, undergoes proteolytic processing by caspase-3 (CASP3), caspase-6 (CASP6) and caspase-7 (CASP7) to generate the XK-related protein 9, processed form, leading to its activation. Highly expressed in the small intestines; weakly expressed in the pancreas, liver, stomach, and large intestines.

Its subcellular location is the cell membrane. It catalyses the reaction a 1,2-diacyl-sn-glycero-3-phospho-L-serine(in) = a 1,2-diacyl-sn-glycero-3-phospho-L-serine(out). Activated upon caspase cleavage to generate the XK-related protein 9, processed form. Does not act prior the onset of apoptosis. Phospholipid scramblase that promotes phosphatidylserine exposure on apoptotic cell surface. Phosphatidylserine is a specific marker only present at the surface of apoptotic cells and acts as a specific signal for engulfment. The chain is XK-related protein 9 from Mus musculus (Mouse).